The following is a 286-amino-acid chain: Pyridoxine 4-dehydrogenase (286 aa).

The Proton donor role is filled by tyrosine 59. 210 to 218 is a binding site for NADP(+); sequence FPLGGFTPL.

This sequence belongs to the aldo/keto reductase family. Aldo/keto reductase 2 subfamily.

The catalysed reaction is pyridoxine + NADP(+) = pyridoxal + NADPH + H(+). It catalyses the reaction pyridoxine + NAD(+) = pyridoxal + NADH + H(+). Its function is as follows. Catalyzes the NAD(P)H-dependent reduction of pyridoxal to pyridoxine in vitro. Is not able to reduce 4-pyridoxate, and to oxidize pyridoxine or pyridoxamine. Has Kemp eliminase activity towards the non-physiological substrate 5-nitrobenzisoxazole, producing 4-nitro-2-cyanophenol; this activity is not considered to be physiologically relevant. This chain is Pyridoxine 4-dehydrogenase, found in Escherichia coli (strain K12).